Consider the following 357-residue polypeptide: MSDKTPRKPTAFRLEQPARVSAASEQEEPRRPRAVKDLEQITPQADVFDLTDDEAAELEILDPAFEAPERKGWSLSRILFGALGILVSFAIGIWTEDLIRALFARADWLGWTALGVAMVALAAFAAIILRELVALRRLASVQHLRKDAADAAERDDMAAARKAVDALRSIAAGIPETAKGRQLLDSLTDDIIDGRDLIRLAETEILRPLDREARTLVLNASKRVSIVTAISPRALVDIGYVIFESARLIRRLSQLYGGRPGTLGFIKFARRVIAHLAVTGTIAMGDSVMQQLVGHGLASRLSAKLGEGVVNGLMTARIGIAAMDVVRPFPFNAEKRPGIGDFIGDLARLNSDRNARK.

Positions 1 to 36 (MSDKTPRKPTAFRLEQPARVSAASEQEEPRRPRAVK) are disordered. A compositionally biased stretch (basic and acidic residues) spans 27 to 36 (EEPRRPRAVK). A run of 2 helical transmembrane segments spans residues 78–98 (ILFGALGILVSFAIGIWTEDL) and 109–129 (LGWTALGVAMVALAAFAAIIL).

This sequence belongs to the UPF0283 family.

The protein resides in the cell inner membrane. In Brucella melitensis biotype 1 (strain ATCC 23456 / CCUG 17765 / NCTC 10094 / 16M), this protein is UPF0283 membrane protein BMEI0952.